We begin with the raw amino-acid sequence, 209 residues long: Redox-sensing transcriptional repressor Rex (209 aa).

Residues 16–55 (LYYRFIQNLSLSGKQRVSSAELSEAVKVDSATIRRDFSYF) constitute a DNA-binding region (H-T-H motif). 90–95 (GVGNLG) is an NAD(+) binding site.

The protein belongs to the transcriptional regulatory Rex family. In terms of assembly, homodimer.

It localises to the cytoplasm. Its function is as follows. Modulates transcription in response to changes in cellular NADH/NAD(+) redox state. This Bacillus cereus (strain ATCC 10987 / NRS 248) protein is Redox-sensing transcriptional repressor Rex.